The primary structure comprises 290 residues: Ribosomal RNA small subunit methyltransferase A (290 aa).

Positions 27, 29, 54, 75, 100, and 125 each coordinate S-adenosyl-L-methionine.

The protein belongs to the class I-like SAM-binding methyltransferase superfamily. rRNA adenine N(6)-methyltransferase family. RsmA subfamily.

Its subcellular location is the cytoplasm. The enzyme catalyses adenosine(1518)/adenosine(1519) in 16S rRNA + 4 S-adenosyl-L-methionine = N(6)-dimethyladenosine(1518)/N(6)-dimethyladenosine(1519) in 16S rRNA + 4 S-adenosyl-L-homocysteine + 4 H(+). Its function is as follows. Specifically dimethylates two adjacent adenosines (A1518 and A1519) in the loop of a conserved hairpin near the 3'-end of 16S rRNA in the 30S particle. May play a critical role in biogenesis of 30S subunits. In Streptococcus uberis (strain ATCC BAA-854 / 0140J), this protein is Ribosomal RNA small subunit methyltransferase A.